We begin with the raw amino-acid sequence, 103 residues long: Flagellar hook-basal body complex protein FliE (103 aa).

It belongs to the FliE family.

It is found in the bacterial flagellum basal body. This Erwinia tasmaniensis (strain DSM 17950 / CFBP 7177 / CIP 109463 / NCPPB 4357 / Et1/99) protein is Flagellar hook-basal body complex protein FliE.